We begin with the raw amino-acid sequence, 279 residues long: DegV domain-containing protein SAR1438 (279 aa).

The DegV domain maps to 4-278 (QIIVTDSTSD…QGAIGLVVLK (275 aa)). Hexadecanoate contacts are provided by Thr61 and Ser93.

Functionally, may bind long-chain fatty acids, such as palmitate, and may play a role in lipid transport or fatty acid metabolism. The sequence is that of DegV domain-containing protein SAR1438 from Staphylococcus aureus (strain MRSA252).